A 148-amino-acid chain; its full sequence is Putative pre-16S rRNA nuclease (148 aa).

This sequence belongs to the YqgF nuclease family.

Its subcellular location is the cytoplasm. Its function is as follows. Could be a nuclease involved in processing of the 5'-end of pre-16S rRNA. The sequence is that of Putative pre-16S rRNA nuclease from Chlamydia muridarum (strain MoPn / Nigg).